Reading from the N-terminus, the 414-residue chain is Diaminopimelate decarboxylase (414 aa).

Residue Lys-52 is modified to N6-(pyridoxal phosphate)lysine. Pyridoxal 5'-phosphate contacts are provided by residues Gly-231 and 265 to 268; that span reads EPGR. Substrate-binding residues include Arg-268, Arg-304, and Tyr-308. Catalysis depends on Cys-334, which acts as the Proton donor. 2 residues coordinate substrate: Glu-335 and Tyr-362. Residue Tyr-362 participates in pyridoxal 5'-phosphate binding.

Belongs to the Orn/Lys/Arg decarboxylase class-II family. LysA subfamily. In terms of assembly, homodimer. Pyridoxal 5'-phosphate serves as cofactor.

The catalysed reaction is meso-2,6-diaminopimelate + H(+) = L-lysine + CO2. It participates in amino-acid biosynthesis; L-lysine biosynthesis via DAP pathway; L-lysine from DL-2,6-diaminopimelate: step 1/1. In terms of biological role, specifically catalyzes the decarboxylation of meso-diaminopimelate (meso-DAP) to L-lysine. The protein is Diaminopimelate decarboxylase of Neisseria meningitidis serogroup B (strain ATCC BAA-335 / MC58).